The sequence spans 210 residues: RNA chaperone ProQ (210 aa).

Composition is skewed to basic and acidic residues over residues Leu103 to Lys124 and Arg132 to Lys144. Residues Leu103 to Lys148 are disordered.

The protein belongs to the ProQ family.

It is found in the cytoplasm. In terms of biological role, RNA chaperone with significant RNA binding, RNA strand exchange and RNA duplexing activities. The polypeptide is RNA chaperone ProQ (Aeromonas salmonicida (strain A449)).